Consider the following 79-residue polypeptide: Defensin-like protein 3 (79 aa).

Positions methionine 1–alanine 29 are cleaved as a signal peptide. Disulfide bonds link cysteine 32–cysteine 79, cysteine 43–cysteine 64, cysteine 49–cysteine 73, and cysteine 53–cysteine 75.

It belongs to the DEFL family.

The protein localises to the secreted. Its function is as follows. Possesses antifungal activity sensitive to inorganic cations. The protein is Defensin-like protein 3 (AFP3) of Brassica napus (Rape).